The chain runs to 479 residues: Acetylcholine receptor subunit alpha-type acr-15 (479 aa).

Positions 1-18 (MLLPILLHFLLLITQLNG) are cleaved as a signal peptide. The Extracellular portion of the chain corresponds to 19–230 (SPAEVRLIND…HLRRRTLYYS (212 aa)). N60 and N92 each carry an N-linked (GlcNAc...) asparagine glycan. C146 and C160 are oxidised to a cystine. The N-linked (GlcNAc...) asparagine glycan is linked to N200. C208 and C209 are joined by a disulfide. Residues 231–251 (FNLIAPVLLTMILVILGFTVS) form a helical membrane-spanning segment. Over 252–257 (PETCEK) the chain is Cytoplasmic. A helical transmembrane segment spans residues 258 to 278 (VGLQISVSLAICIFLTIMSEL). The Extracellular portion of the chain corresponds to 279-285 (TPQTSEA). Residues 286–306 (VPLLGVFFHTCNFISVLATSF) traverse the membrane as a helical segment. The Cytoplasmic portion of the chain corresponds to 307–453 (TVYVQSFHFR…WRFAAIVVDR (147 aa)). A helical transmembrane segment spans residues 454-474 (LCLLAFSLLIVVVSIIIALRA). The Extracellular portion of the chain corresponds to 475 to 479 (PYLFA).

Belongs to the ligand-gated ion channel (TC 1.A.9) family. Acetylcholine receptor (TC 1.A.9.1) subfamily. Expressed in interneurons, motor neurons, pharyngeal neurons and muscles.

It localises to the cell membrane. It is found in the postsynaptic cell membrane. After binding acetylcholine, the AChR responds by an extensive change in conformation that affects all subunits and leads to opening of an ion-conducting channel across the plasma membrane. Activity is required in glutamatergic neurons to mediate nicotine-induced and nicotine-motivated behaviors. The polypeptide is Acetylcholine receptor subunit alpha-type acr-15 (Caenorhabditis elegans).